The primary structure comprises 1051 residues: MKETPKKVLVIGSGPIKIAEAAEFDYSGSQALKALKEEGIETVLVNSNVATVQTSKKFADKLYMLPVVWWAVEKVIEKERPDGIMIGFGGQTALNVGVDLHKKGVLQKYGVKVLGTQIDGIEKALSREKFRETMIENNLPVPPSLSARSEEEAIKNAKIVGYPVMVRVSFNLGGRGSMVAWTEEDLKKNIRRALSQSYIGEVLIEKYLYHWIELEYEVMRDKKGNSAVIACIENLDPMGVHTGESTVVAPCQTLDNLEYQNMRTYTIEVARSINLIGECNVQFALNPRGYEYYIIETNPRMSRSSALASKATGYPLAYVSAKLALGYELHEVINKVSGRTCACFEPSLDYIVTKIPRWDLSKFENVDQSLATEMMSVGEVMSIGRSFEESLQKAVRMLDIGEPGVVGGKIYEAKMSKVEALKYLKERRPYWFLYVAKAFKEGATIDEVYEVTGISKFFLNKIKGLVDFYETLKILKEIDEETLKLAKKLGFSDEQISKALNKSTEYVRKIRDQSNIIPVVKLIDTLAGEWPSVTNYMYLTYNGTEDDLEFSQGNKLLIVGAGGFRIGVSVEFDWSVVSLMEAASKYFDEVAVLNYNPETVSTDWDIARKLYFDEINVERVLDLIKKEKFRYVATFSGGQIGNSIAKELEENGVRLLGTSGSSVDIAENREKFSKLLDKLGISQPNWVSATSLEEIKKFVNEVGFPVLVRPSYVLSGSSMKIAYSEEELYEYVRRATEISPKYPVVISKYIENAIEAEVDGVSDGNRVLGITLEHVEEAGVHSGDATMSIPFRKLSENSVNKMRENVLSLARELNIKGPFNVQFVVKDNTPHIIELNLRASRSMPFSSKAKGINLINESMKAIFNGLDFSEDYYEPPSKYWAVKSPQFSWSQLRGTYPFLGPEMKSTGEAASFGVTFYDALLKSWLSSIPNRIPNKNGIALVYGDKNLDYLKDTAVNLVKFGLTVYSISELPLQGIETIDKTKAEELVRAKKVEIVVTDGYLKKFDYNIRRTAVDYNIPVILNGRLGYEVSKAFLDYDSLTFFEISEYGGGI.

The interval 1-399 (MKETPKKVLV…SLQKAVRMLD (399 aa)) is carboxyphosphate synthetic domain. R127, R167, G173, G174, K206, L208, E213, G239, V240, H241, Q282, and E296 together coordinate ATP. One can recognise an ATP-grasp 1 domain in the interval 131-325 (RETMIENNLP…LAYVSAKLAL (195 aa)). Q282, E296, and N298 together coordinate Mg(2+). Positions 282, 296, and 298 each coordinate Mn(2+). The tract at residues 400 to 548 (IGEPGVVGGK…LTYNGTEDDL (149 aa)) is oligomerization domain. The segment at 549–930 (EFSQGNKLLI…LKSWLSSIPN (382 aa)) is carbamoyl phosphate synthetic domain. Residues 673–863 (SKLLDKLGIS…LINESMKAIF (191 aa)) form the ATP-grasp 2 domain. R709, K748, I750, E755, G779, V780, H781, S782, Q822, and E834 together coordinate ATP. The Mg(2+) site is built by Q822, E834, and N836. Mn(2+) contacts are provided by Q822, E834, and N836. Residues 930–1051 (NRIPNKNGIA…FEISEYGGGI (122 aa)) enclose the MGS-like domain. Residues 931–1051 (RIPNKNGIAL…FEISEYGGGI (121 aa)) form an allosteric domain region.

Belongs to the CarB family. As to quaternary structure, composed of two chains; the small (or glutamine) chain promotes the hydrolysis of glutamine to ammonia, which is used by the large (or ammonia) chain to synthesize carbamoyl phosphate. Tetramer of heterodimers (alpha,beta)4. Mg(2+) is required as a cofactor. The cofactor is Mn(2+).

It catalyses the reaction hydrogencarbonate + L-glutamine + 2 ATP + H2O = carbamoyl phosphate + L-glutamate + 2 ADP + phosphate + 2 H(+). It carries out the reaction hydrogencarbonate + NH4(+) + 2 ATP = carbamoyl phosphate + 2 ADP + phosphate + 2 H(+). It participates in amino-acid biosynthesis; L-arginine biosynthesis; carbamoyl phosphate from bicarbonate: step 1/1. It functions in the pathway pyrimidine metabolism; UMP biosynthesis via de novo pathway; (S)-dihydroorotate from bicarbonate: step 1/3. In terms of biological role, large subunit of the glutamine-dependent carbamoyl phosphate synthetase (CPSase). CPSase catalyzes the formation of carbamoyl phosphate from the ammonia moiety of glutamine, carbonate, and phosphate donated by ATP, constituting the first step of 2 biosynthetic pathways, one leading to arginine and/or urea and the other to pyrimidine nucleotides. The large subunit (synthetase) binds the substrates ammonia (free or transferred from glutamine from the small subunit), hydrogencarbonate and ATP and carries out an ATP-coupled ligase reaction, activating hydrogencarbonate by forming carboxy phosphate which reacts with ammonia to form carbamoyl phosphate. This is Carbamoyl phosphate synthase large chain from Saccharolobus islandicus (strain M.16.27) (Sulfolobus islandicus).